We begin with the raw amino-acid sequence, 359 residues long: NF-kappa-B inhibitor beta (359 aa).

Residues Ser19 and Ser23 each carry the phosphoserine; by RPS6KA1 modification. ANK repeat units follow at residues 57 to 86, 93 to 122, 126 to 155, 206 to 235, 240 to 269, and 273 to 302; these read DGDTALHLAVIHQHEPFLDFLLGFSAGTEY, LGQTALHLAAILGEASTVEKLYAAGAGVLV, GGHTALHLACRVRAHTCAYVLLQPRPSHPR, DGHTPLHVAVIHKDAEMVQLLRDAGADLNK, CGRTPLHLAVEGQAAGVLALLLKAGADPTA, and GGRTPLGSALLRPNPVLARLLRAHGAPEPE. The disordered stretch occupies residues 153-192; the sequence is HPRDASDTYLTQSQDHTPDTSHAPVATDPQPNPGNEEELR. Residues 298–308 are compositionally biased toward basic and acidic residues; the sequence is APEPEDKDDKL. Residues 298–359 form a disordered region; sequence APEPEDKDDK…KPLPDDPNPA (62 aa). At Ser318 the chain carries Phosphoserine. Residues 318–331 are compositionally biased toward acidic residues; that stretch reads SDSDNRDEGDEYDD. Residues 342–359 show a composition bias toward pro residues; the sequence is QPPPSPAAKPLPDDPNPA.

Belongs to the NF-kappa-B inhibitor family. As to quaternary structure, interacts with THRB (via ligand-binding domain). Interacts with RELA and REL. Interacts with COMMD1. Interacts with inhibitor kappa B-interacting Ras-like NKIRAS1 and NKIRAS2. Phosphorylated by RPS6KA1; followed by degradation. Interaction with NKIRAS1 and NKIRAS2 probably prevents phosphorylation.

It localises to the cytoplasm. Its subcellular location is the nucleus. In terms of biological role, inhibits NF-kappa-B by complexing with and trapping it in the cytoplasm. However, the unphosphorylated form resynthesized after cell stimulation is able to bind NF-kappa-B allowing its transport to the nucleus and protecting it to further NFKBIA-dependent inactivation. Association with inhibitor kappa B-interacting NKIRAS1 and NKIRAS2 prevent its phosphorylation rendering it more resistant to degradation, explaining its slower degradation. In Rattus norvegicus (Rat), this protein is NF-kappa-B inhibitor beta (Nfkbib).